Here is a 133-residue protein sequence, read N- to C-terminus: L-cystatin (133 aa).

The N-terminal stretch at Met-1–Gly-19 is a signal peptide. At Gln-20 the chain carries Pyrrolidone carboxylic acid. The short motif at Gln-67–Gly-71 is the Secondary area of contact element. 2 cysteine pairs are disulfide-bonded: Cys-85–Cys-98 and Cys-109–Cys-129.

The protein belongs to the cystatin family. As to expression, expressed in hemocytes and slightly in heart.

The protein resides in the cytoplasmic granule. Its function is as follows. Tight-binding inhibitor for papain. It has an important role in the protection of cells, antimicrobial activity against Gram-negative bacteria, defense against invading microbes, and response to external stimuli. This Tachypleus tridentatus (Japanese horseshoe crab) protein is L-cystatin.